Consider the following 109-residue polypeptide: MSEDRVTLADLERIVAARAQADAGASYTRSLLDKGISKCAQKLGEEAVETALAAVGSDKAAVISETADLLYHLAVLLHAKGVELDEVHAELARRTRQSGHEEKASRQRS.

This sequence belongs to the PRA-PH family.

The protein localises to the cytoplasm. The catalysed reaction is 1-(5-phospho-beta-D-ribosyl)-ATP + H2O = 1-(5-phospho-beta-D-ribosyl)-5'-AMP + diphosphate + H(+). Its pathway is amino-acid biosynthesis; L-histidine biosynthesis; L-histidine from 5-phospho-alpha-D-ribose 1-diphosphate: step 2/9. This chain is Phosphoribosyl-ATP pyrophosphatase, found in Azorhizobium caulinodans (strain ATCC 43989 / DSM 5975 / JCM 20966 / LMG 6465 / NBRC 14845 / NCIMB 13405 / ORS 571).